The chain runs to 503 residues: Maturase K (503 aa).

Belongs to the intron maturase 2 family. MatK subfamily.

The protein localises to the plastid. It is found in the chloroplast. Usually encoded in the trnK tRNA gene intron. Probably assists in splicing its own and other chloroplast group II introns. This Syzygium australe (Brush cherry) protein is Maturase K.